A 426-amino-acid polypeptide reads, in one-letter code: MLDLKRIRNNSNEIKEALNNRGEKFDVTVIDEVLKLDEERRNILAKVEVLKSKRNQVSSEVPKLKKEGKDVSNIVAEMKNLSEEIKGFDATLAKIDEKIQYIMLRIPNIPNPQVPDGETDEDNIEIRNWLEPTKFYFEPKAHWDIGTNLNILDFERAGKVTGSRFTFYKGLGARLERAVISYFLDTHTEKHGYTEILPPYMVNRTSMIGTGQLPKFEEDAFKISEDDYFLIPTAEVPVTNLYRDEILKGDELPLKHVAYSACFRSEAGSAGRDTRGLVRQHQFNKVELVKFTKPEQSYEELEKLTNDAETVLKELGIPYRVVRICKGDLGFTAALKYDLEVWMPSYNRYVEISSCSNFEDFQARRANIRYKEDAKAKPQYVHTLNGSGVAIGRTVAAILENYQSEDGSVTIPEVLRPYMGGREVIK.

Residue 233–235 coordinates L-serine; it reads TAE. 264–266 is an ATP binding site; the sequence is RSE. E287 contacts L-serine. 351–354 contributes to the ATP binding site; the sequence is EISS. Position 387 (S387) interacts with L-serine.

It belongs to the class-II aminoacyl-tRNA synthetase family. Type-1 seryl-tRNA synthetase subfamily. Homodimer. The tRNA molecule binds across the dimer.

It is found in the cytoplasm. It carries out the reaction tRNA(Ser) + L-serine + ATP = L-seryl-tRNA(Ser) + AMP + diphosphate + H(+). The catalysed reaction is tRNA(Sec) + L-serine + ATP = L-seryl-tRNA(Sec) + AMP + diphosphate + H(+). Its pathway is aminoacyl-tRNA biosynthesis; selenocysteinyl-tRNA(Sec) biosynthesis; L-seryl-tRNA(Sec) from L-serine and tRNA(Sec): step 1/1. Its function is as follows. Catalyzes the attachment of serine to tRNA(Ser). Is also able to aminoacylate tRNA(Sec) with serine, to form the misacylated tRNA L-seryl-tRNA(Sec), which will be further converted into selenocysteinyl-tRNA(Sec). The chain is Serine--tRNA ligase from Clostridium botulinum (strain Langeland / NCTC 10281 / Type F).